We begin with the raw amino-acid sequence, 471 residues long: UDP-N-acetylmuramate--L-alanine ligase (471 aa).

Position 114 to 120 (114 to 120 (GTHGKTT)) interacts with ATP.

The protein belongs to the MurCDEF family.

Its subcellular location is the cytoplasm. It carries out the reaction UDP-N-acetyl-alpha-D-muramate + L-alanine + ATP = UDP-N-acetyl-alpha-D-muramoyl-L-alanine + ADP + phosphate + H(+). It participates in cell wall biogenesis; peptidoglycan biosynthesis. Its function is as follows. Cell wall formation. This Methylobacterium sp. (strain 4-46) protein is UDP-N-acetylmuramate--L-alanine ligase.